The chain runs to 379 residues: tRNA-specific 2-thiouridylase MnmA (379 aa).

ATP-binding positions include 9–16 and Met-35; that span reads AMSGGVDS. An interaction with target base in tRNA region spans residues 94–96; sequence NPD. The active-site Nucleophile is Cys-99. A disulfide bridge links Cys-99 with Cys-195. Residue Gly-123 participates in ATP binding. An interaction with tRNA region spans residues 145–147; that stretch reads KDQ. Residue Cys-195 is the Cysteine persulfide intermediate of the active site. The interaction with tRNA stretch occupies residues 307 to 308; the sequence is RY.

The protein belongs to the MnmA/TRMU family.

The protein resides in the cytoplasm. It carries out the reaction S-sulfanyl-L-cysteinyl-[protein] + uridine(34) in tRNA + AH2 + ATP = 2-thiouridine(34) in tRNA + L-cysteinyl-[protein] + A + AMP + diphosphate + H(+). Catalyzes the 2-thiolation of uridine at the wobble position (U34) of tRNA, leading to the formation of s(2)U34. The polypeptide is tRNA-specific 2-thiouridylase MnmA (Xylella fastidiosa (strain M12)).